A 555-amino-acid chain; its full sequence is Glutamine--tRNA ligase (555 aa).

Residues 35–45 (PEPNGYLHIGH) carry the 'HIGH' region motif. ATP-binding positions include 36 to 38 (EPN) and 42 to 48 (HIGHAKS). Residues D68 and Y213 each coordinate L-glutamine. Residues T232 and 262-263 (RL) each bind ATP. The 'KMSKS' region motif lies at 269–273 (ITSKR).

This sequence belongs to the class-I aminoacyl-tRNA synthetase family. In terms of assembly, monomer.

It is found in the cytoplasm. It carries out the reaction tRNA(Gln) + L-glutamine + ATP = L-glutaminyl-tRNA(Gln) + AMP + diphosphate. In Azotobacter vinelandii (strain DJ / ATCC BAA-1303), this protein is Glutamine--tRNA ligase.